We begin with the raw amino-acid sequence, 341 residues long: tRNA N6-adenosine threonylcarbamoyltransferase (341 aa).

2 residues coordinate Fe cation: His111 and His115. Residues 134–138 (LVSGG), Asp167, Gly180, and Asn276 contribute to the substrate site. Position 304 (Asp304) interacts with Fe cation.

Belongs to the KAE1 / TsaD family. Fe(2+) serves as cofactor.

It is found in the cytoplasm. It carries out the reaction L-threonylcarbamoyladenylate + adenosine(37) in tRNA = N(6)-L-threonylcarbamoyladenosine(37) in tRNA + AMP + H(+). Its function is as follows. Required for the formation of a threonylcarbamoyl group on adenosine at position 37 (t(6)A37) in tRNAs that read codons beginning with adenine. Is involved in the transfer of the threonylcarbamoyl moiety of threonylcarbamoyl-AMP (TC-AMP) to the N6 group of A37, together with TsaE and TsaB. TsaD likely plays a direct catalytic role in this reaction. The protein is tRNA N6-adenosine threonylcarbamoyltransferase of Pseudomonas paraeruginosa (strain DSM 24068 / PA7) (Pseudomonas aeruginosa (strain PA7)).